The sequence spans 288 residues: 2-dehydro-3-deoxyphosphooctonate aldolase (288 aa).

It belongs to the KdsA family.

The protein localises to the cytoplasm. The catalysed reaction is D-arabinose 5-phosphate + phosphoenolpyruvate + H2O = 3-deoxy-alpha-D-manno-2-octulosonate-8-phosphate + phosphate. Its pathway is carbohydrate biosynthesis; 3-deoxy-D-manno-octulosonate biosynthesis; 3-deoxy-D-manno-octulosonate from D-ribulose 5-phosphate: step 2/3. It participates in bacterial outer membrane biogenesis; lipopolysaccharide biosynthesis. The polypeptide is 2-dehydro-3-deoxyphosphooctonate aldolase (Syntrophobacter fumaroxidans (strain DSM 10017 / MPOB)).